The chain runs to 195 residues: Kiwa protein KwaA (195 aa).

The next 3 helical transmembrane spans lie at 10-30, 46-66, and 117-137; these read GLYI…TAKI, LVLT…SIYF, and IAYL…DKYY.

The protein localises to the cell inner membrane. In terms of biological role, component of antiviral defense system Kiwa, composed of KwaA and KwaB. Expression of Kiwa in E.coli (strain MG1655) confers resistance to phages lambda and SECphi18. This chain is Kiwa protein KwaA, found in Escherichia coli O55:H7 (strain RM12579 / EPEC).